Reading from the N-terminus, the 450-residue chain is tRNA modification GTPase MnmE (450 aa).

The (6S)-5-formyl-5,6,7,8-tetrahydrofolate site is built by Arg25, Glu86, and Arg126. The TrmE-type G domain maps to 221-373 (GLRVALVGRP…LVQALLERCG (153 aa)). Residue Asn231 participates in K(+) binding. GTP is bound by residues 231 to 236 (NVGKSS), 250 to 256 (TELPGTT), 275 to 278 (DTAG), and 336 to 339 (NKAD). A Mg(2+)-binding site is contributed by Ser235. Thr250, Leu252, and Thr255 together coordinate K(+). Mg(2+) is bound at residue Thr256. Lys450 contributes to the (6S)-5-formyl-5,6,7,8-tetrahydrofolate binding site.

The protein belongs to the TRAFAC class TrmE-Era-EngA-EngB-Septin-like GTPase superfamily. TrmE GTPase family. In terms of assembly, homodimer. Heterotetramer of two MnmE and two MnmG subunits. It depends on K(+) as a cofactor.

The protein localises to the cytoplasm. In terms of biological role, exhibits a very high intrinsic GTPase hydrolysis rate. Involved in the addition of a carboxymethylaminomethyl (cmnm) group at the wobble position (U34) of certain tRNAs, forming tRNA-cmnm(5)s(2)U34. The polypeptide is tRNA modification GTPase MnmE (Parasynechococcus marenigrum (strain WH8102)).